The primary structure comprises 25 residues: Neuromedin-U-25 (25 aa).

At Asn25 the chain carries Asparagine amide.

The protein belongs to the NmU family.

It localises to the secreted. In terms of biological role, stimulates uterine smooth muscle contraction and causes selective vasoconstriction. The chain is Neuromedin-U-25 (NMU) from Sus scrofa (Pig).